The chain runs to 96 residues: ATP-dependent Clp protease adapter protein ClpS (96 aa).

This sequence belongs to the ClpS family. In terms of assembly, binds to the N-terminal domain of the chaperone ClpA.

Functionally, involved in the modulation of the specificity of the ClpAP-mediated ATP-dependent protein degradation. The sequence is that of ATP-dependent Clp protease adapter protein ClpS from Streptomyces coelicolor (strain ATCC BAA-471 / A3(2) / M145).